The following is a 67-amino-acid chain: Metallothionein-A (67 aa).

This sequence belongs to the metallothionein superfamily. Type 4 family.

Its function is as follows. Metallothioneins have a high content of cysteine residues that bind various heavy metals. The sequence is that of Metallothionein-A from Sphaerechinus granularis (Purple sea urchin).